We begin with the raw amino-acid sequence, 212 residues long: Uridine kinase (212 aa).

ATP is bound at residue 12–19 (GGSGGGKT).

It belongs to the uridine kinase family.

It localises to the cytoplasm. The enzyme catalyses uridine + ATP = UMP + ADP + H(+). It carries out the reaction cytidine + ATP = CMP + ADP + H(+). It functions in the pathway pyrimidine metabolism; CTP biosynthesis via salvage pathway; CTP from cytidine: step 1/3. The protein operates within pyrimidine metabolism; UMP biosynthesis via salvage pathway; UMP from uridine: step 1/1. This Streptococcus pneumoniae serotype 19F (strain G54) protein is Uridine kinase.